Consider the following 449-residue polypeptide: Probable mitochondrial chaperone bcs1 (449 aa).

Residues 1 to 20 (MDNIGAADAATSSGISGLLS) are Mitochondrial intermembrane-facing. The chain crosses the membrane as a helical span at residues 21–41 (GNSFLGAGIGLMGFGAGLAIL). Topologically, residues 42-449 (RRGLISGASL…FNVHRKSLSV (408 aa)) are mitochondrial matrix. ATP is bound at residue 249–256 (GPPGSGKT).

Belongs to the AAA ATPase family. BCS1 subfamily.

It is found in the mitochondrion inner membrane. It catalyses the reaction ATP + H2O = ADP + phosphate + H(+). In terms of biological role, chaperone necessary for the incorporation of Rieske iron-sulfur protein rip1 into the mitochondrial respiratory chain complex III. This Schizosaccharomyces pombe (strain 972 / ATCC 24843) (Fission yeast) protein is Probable mitochondrial chaperone bcs1.